The primary structure comprises 236 residues: MAFNVTILSIFPEMFPGFLNYSLAGKALEKKIWNLEVINIRSFAKDKHSTVDDVPYGGGAGMVMRSDVVGDAVDSMLSVHKNTKFIYMTPSGTKFNQNIARELLEFPHITILCGRFEGIDQRIIDAYTPYELSIGDYILSGGEPAAMVVLDACIRLLPGVVNNTDSITEESFNYGGGVLEYPQYTRPEQWKGYKVPEVLLSGNHKKISDWRQKQSHVITKKRRPELLSGEINDKFT.

S-adenosyl-L-methionine-binding positions include glycine 114 and 134–139; that span reads IGDYIL.

It belongs to the RNA methyltransferase TrmD family. In terms of assembly, homodimer.

The protein localises to the cytoplasm. The enzyme catalyses guanosine(37) in tRNA + S-adenosyl-L-methionine = N(1)-methylguanosine(37) in tRNA + S-adenosyl-L-homocysteine + H(+). Functionally, specifically methylates guanosine-37 in various tRNAs. This chain is tRNA (guanine-N(1)-)-methyltransferase, found in Wolbachia pipientis wMel.